A 207-amino-acid polypeptide reads, in one-letter code: Oligoribonuclease (207 aa).

The Exonuclease domain occupies 8–172 (LVWIDCEMTG…ADILESVREL (165 aa)). Tyr-129 is a catalytic residue.

It belongs to the oligoribonuclease family.

The protein localises to the cytoplasm. In terms of biological role, 3'-to-5' exoribonuclease specific for small oligoribonucleotides. This Leifsonia xyli subsp. xyli (strain CTCB07) protein is Oligoribonuclease.